A 199-amino-acid chain; its full sequence is NAD(P)H dehydrogenase (quinone) (199 aa).

Residues 4 to 190 (VLVLYYSAYG…AGARYQGRVI (187 aa)) form the Flavodoxin-like domain. Residues 10–15 (SAYGHI) and 78–80 (TRF) contribute to the FMN site. An NAD(+)-binding site is contributed by tyrosine 12. Tryptophan 98 is a binding site for substrate. FMN-binding positions include 113 to 119 (STATQHG) and histidine 134.

This sequence belongs to the WrbA family. FMN serves as cofactor.

The enzyme catalyses a quinone + NADH + H(+) = a quinol + NAD(+). It catalyses the reaction a quinone + NADPH + H(+) = a quinol + NADP(+). The polypeptide is NAD(P)H dehydrogenase (quinone) (Bradyrhizobium sp. (strain ORS 278)).